The chain runs to 402 residues: Multidrug resistance protein MdtH (402 aa).

Over 1–12 (MSRVSQARNLGK) the chain is Cytoplasmic. A helical transmembrane segment spans residues 13-33 (YFLLIDNMLVVLGFFVVFPLI). Topologically, residues 34 to 98 (SIRFVDQMGW…GFATMGIAHE (65 aa)) are periplasmic. Residues 99–116 (PWLLWFSCFLSGLGGTLF) traverse the membrane as a helical segment. Over 117-138 (DPPRSALVVKLIRPEQRGRFFS) the chain is Cytoplasmic. A helical transmembrane segment spans residues 139–159 (LLMMQDSAGAVIGALLGSWLL). Topologically, residues 160–164 (QYDFR) are periplasmic. The helical transmembrane segment at 165-185 (LVCATGAILFILCALFNAWLL) threads the bilayer. Topologically, residues 186-213 (PAWKLSTVRTPVREGMRRVMSDKRFVTY) are cytoplasmic. Residues 214 to 234 (VLTLAGYYMLAVQVMLMLPIM) form a helical membrane-spanning segment. Topologically, residues 235 to 243 (VNDIAGSPA) are periplasmic. The helical transmembrane segment at 244–264 (AVKWMYAIEACLSLTLLYPIA) threads the bilayer. Over 265 to 276 (RWSEKRFRLEHR) the chain is Cytoplasmic. A helical transmembrane segment spans residues 277-297 (LMAGLLVMSLSMIPIGMVGNL). Residues 298–299 (QQ) lie on the Periplasmic side of the membrane. The chain crosses the membrane as a helical span at residues 300–320 (LFTLICAFYIGSVIAEPARET). Topologically, residues 321–339 (LSASLADARARGSYMGFSR) are cytoplasmic. A helical transmembrane segment spans residues 340 to 360 (LGLAIGGAIGYIGGGWLFDMG). Over 361–367 (KALAQPE) the chain is Periplasmic. Residues 368–388 (LPWMMLGIIGFITFLALGWQF) form a helical membrane-spanning segment. Over 389–402 (SHKRTPRRMLEPGA) the chain is Cytoplasmic.

The protein belongs to the major facilitator superfamily. DHA1 family. MdtH (TC 2.A.1.2.21) subfamily.

It is found in the cell inner membrane. The protein is Multidrug resistance protein MdtH of Salmonella schwarzengrund (strain CVM19633).